We begin with the raw amino-acid sequence, 286 residues long: MKIDGYTRMAAVVANPIKHSLSPFIHNLAFDLTDENGVYLAWEVESKKLAAIVENVRNLDMYGLNISMPYKGEIIKFMDELSPAAELIGAVNTVVNHSGKLIGHNTDGIGFFNSLKKYDFKIENKQILVLGGGGAAIALIAQAALSGAKKIVVAARKSASYDPLNEKLAKLSAKTGVEILLTDLSGADRLQKELNQTDLLVNATSVGMDGASFPLEKSLLLPDKLLVVDAIYKVRETPFLHWAKEQGAQTENGLGMLIGQAAESFYLWTGKEMPVDKITLEMEREV.

Residues 20–22 (SLS) and Ser-67 each bind shikimate. Residue Lys-71 is the Proton acceptor of the active site. Shikimate is bound by residues Asn-92 and Asp-107. Residues 131–135 (GGGGA) and Ala-230 each bind NADP(+). Tyr-232 is a shikimate binding site. NADP(+) is bound at residue Gly-253.

It belongs to the shikimate dehydrogenase family. As to quaternary structure, homodimer.

It carries out the reaction shikimate + NADP(+) = 3-dehydroshikimate + NADPH + H(+). It functions in the pathway metabolic intermediate biosynthesis; chorismate biosynthesis; chorismate from D-erythrose 4-phosphate and phosphoenolpyruvate: step 4/7. Involved in the biosynthesis of the chorismate, which leads to the biosynthesis of aromatic amino acids. Catalyzes the reversible NADPH linked reduction of 3-dehydroshikimate (DHSA) to yield shikimate (SA). The sequence is that of Shikimate dehydrogenase (NADP(+)) from Lactococcus lactis subsp. cremoris (strain MG1363).